We begin with the raw amino-acid sequence, 103 residues long: Small ribosomal subunit protein uS10 (103 aa).

This sequence belongs to the universal ribosomal protein uS10 family. Part of the 30S ribosomal subunit.

Functionally, involved in the binding of tRNA to the ribosomes. The protein is Small ribosomal subunit protein uS10 of Novosphingobium aromaticivorans (strain ATCC 700278 / DSM 12444 / CCUG 56034 / CIP 105152 / NBRC 16084 / F199).